Here is a 408-residue protein sequence, read N- to C-terminus: Peptidase T (408 aa).

His78 serves as a coordination point for Zn(2+). The active site involves Asp80. Position 140 (Asp140) interacts with Zn(2+). Glu173 serves as the catalytic Proton acceptor. Zn(2+) contacts are provided by Glu174, Asp196, and His379.

This sequence belongs to the peptidase M20B family. Zn(2+) is required as a cofactor.

It localises to the cytoplasm. The enzyme catalyses Release of the N-terminal residue from a tripeptide.. Cleaves the N-terminal amino acid of tripeptides. The sequence is that of Peptidase T from Escherichia coli O9:H4 (strain HS).